Here is a 341-residue protein sequence, read N- to C-terminus: tRNA N6-adenosine threonylcarbamoyltransferase (341 aa).

Fe cation is bound by residues histidine 111 and histidine 115. Substrate is bound by residues 134 to 138 (LVSGG), aspartate 167, glycine 180, and asparagine 276. Position 304 (aspartate 304) interacts with Fe cation.

Belongs to the KAE1 / TsaD family. Fe(2+) serves as cofactor.

It is found in the cytoplasm. It carries out the reaction L-threonylcarbamoyladenylate + adenosine(37) in tRNA = N(6)-L-threonylcarbamoyladenosine(37) in tRNA + AMP + H(+). Required for the formation of a threonylcarbamoyl group on adenosine at position 37 (t(6)A37) in tRNAs that read codons beginning with adenine. Is involved in the transfer of the threonylcarbamoyl moiety of threonylcarbamoyl-AMP (TC-AMP) to the N6 group of A37, together with TsaE and TsaB. TsaD likely plays a direct catalytic role in this reaction. This is tRNA N6-adenosine threonylcarbamoyltransferase from Pseudomonas aeruginosa (strain ATCC 15692 / DSM 22644 / CIP 104116 / JCM 14847 / LMG 12228 / 1C / PRS 101 / PAO1).